Consider the following 622-residue polypeptide: Prothrombin (622 aa).

The first 24 residues, 1 to 24 (MAHVRGLQLPGCLALAALCSLVHS), serve as a signal peptide directing secretion. Residues 25 to 43 (QHVFLAPQQARSLLQRVRR) constitute a propeptide that is removed on maturation. A Gla domain is found at 44–89 (ANTFLEEVRKGNLERECVEETCSYEEAFEALESSTATDVFWAKYTA). A 4-carboxyglutamate mark is found at E49, E50, E57, E59, E62, E63, E68, E69, E72, and E75. A disulfide bond links C60 and C65. 11 disulfides stabilise this stretch: C90-C103, C108-C186, C129-C169, C157-C181, C213-C291, C234-C274, C262-C286, C336-C482, C391-C407, C536-C550, and C564-C594. Kringle domains lie at 108-186 (CAEG…IPVC) and 213-291 (CVPD…LNYC). N121 and N143 each carry an N-linked (GlcNAc...) (complex) asparagine glycan. The 255-residue stretch at 364 to 618 (IVEGSDAEIG…LKKWIQKVID (255 aa)) folds into the Peptidase S1 domain. The active-site Charge relay system is H406. Residue N416 is glycosylated (N-linked (GlcNAc...) (complex) asparagine). D462 functions as the Charge relay system in the catalytic mechanism. Positions 551–573 (AGYKPDEGKRGDACEGDSGGPFV) are high affinity receptor-binding region which is also known as the TP508 peptide. S568 serves as the catalytic Charge relay system.

Belongs to the peptidase S1 family. As to quaternary structure, heterodimer (named alpha-thrombin) of a light and a heavy chain; disulfide-linked. Forms a heterodimer with SERPINA5. In plasma, interacts (via N-terminus) with alpha-1-microglobulin with molar ratio 1:2 and 1:1; this interaction does not prevent the activation of prothrombin to thrombin. Interacts (thrombin) with iripin-8, a serine protease inhibitor from Ixodes ricinus saliva. Interacts (thrombin) with iripin-3, a serine protease inhibitor from Ixodes ricinus saliva. Interacts (thrombin) with Anopheles albimanus salivary thrombin inhibitor anophelin; the interaction results in thrombin inhibition. Interacts (thrombin) with Anopheles gambiae salivary thrombin inhibitor anophelin; the interaction results in thrombin inhibition. Interacts (thrombin) with Amblyomma variegatum variegin; the interaction results in thrombin inhibition. Interacts (thrombin) with Xenopsylla cheopis salivary thrombin inhibitor XC-42. Interacts (thrombin) with Xenopsylla cheopis salivary thrombin inhibitor XC-43. Post-translationally, the gamma-carboxyglutamyl residues, which bind calcium ions, result from the carboxylation of glutamyl residues by a microsomal enzyme, the vitamin K-dependent carboxylase. The modified residues are necessary for the calcium-dependent interaction with a negatively charged phospholipid surface, which is essential for the conversion of prothrombin to thrombin. N-glycosylated. N-glycan heterogeneity at Asn-121: Hex3HexNAc3 (minor), Hex4HexNAc3 (minor) and Hex5HexNAc4 (major). At Asn-143: Hex4HexNAc3 (minor) and Hex5HexNAc4 (major). In terms of processing, in the penultimate step of the coagulation cascade, prothrombin is converted to thrombin by the prothrombinase complex composed of factor Xa (F10), cofactor Va (F5), and phospholipids. This activation requires factor Xa-catalyzed sequential cleavage at 2 sites, Arg-314 and Arg-363, along 2 possible pathways. In the first pathway, the first cleavage occurs at Arg-314, leading to the formation of the inactive intermediate prethrombin-2. This pathway preferentially occurs on platelets and in the absence of cofactor Va. In the second pathway, the first cleavage occurs at Arg-363, which separates protease domain into 2 chains that remain connected through a disulfide bond and generates the active intermediate meizothrombin. The presence of cofactor Va directs activation along the meizothrombin pathway and greatly accelerates the rate of cleavage at Arg-363, but has a smaller effect on the cleavage of meizothrombin at Arg-314. Meizothrombin accumulates as an intermediate when prothrombinase is assembled on the membrane of red blood cells. In terms of tissue distribution, expressed by the liver and secreted in plasma.

The protein localises to the secreted. Its subcellular location is the extracellular space. It carries out the reaction Selective cleavage of Arg-|-Gly bonds in fibrinogen to form fibrin and release fibrinopeptides A and B.. With respect to regulation, activity is promoted in the presence of negatively charged surfaces, such as polyphosphate and dextran sulfate. Inhibited by SERPINA5. In terms of biological role, thrombin, which cleaves bonds after Arg and Lys, converts fibrinogen to fibrin and activates factors V, VII, VIII, XIII, and, in complex with thrombomodulin, protein C. Functions in blood homeostasis, inflammation and wound healing. Activates coagulation factor XI (F11); activation is promoted by the contact with negatively charged surfaces. Triggers the production of pro-inflammatory cytokines, such as MCP-1/CCL2 and IL8/CXCL8, in endothelial cells. This chain is Prothrombin (F2), found in Homo sapiens (Human).